The primary structure comprises 472 residues: Zinc finger and BTB domain-containing protein 18.2 (472 aa).

In terms of domain architecture, BTB spans 24 to 91 (CDCTVLVGEA…MYEGKLEFSN (68 aa)). The segment covering 127-149 (KIIDDGEKDDKPVDSEEHHEHSF) has biased composition (basic and acidic residues). Disordered stretches follow at residues 127–155 (KIID…SQQK), 197–236 (AGKT…FKPM), and 269–334 (DLLS…LSTS). Residues 205 to 215 (SSPSSPLSQRS) show a composition bias toward low complexity. Residues 279 to 288 (AKSPKSQQVG) are compositionally biased toward polar residues. Residues 309–319 (HTREDDLYQDR) are compositionally biased toward basic and acidic residues. C2H2-type zinc fingers lie at residues 344 to 366 (CICP…LSSH), 384 to 406 (PTCT…ERTH), 412 to 434 (FTCG…AVVH), and 440 to 463 (HACK…RKFH).

It belongs to the krueppel C2H2-type zinc-finger protein family. ZBTB18 subfamily.

It localises to the nucleus. Transcriptional repressor that plays a role in various developmental processes. Specifically binds the consensus DNA sequence 5'-[AC]ACATCTG[GT][AC]-3' which contains the E box core, and acts by recruiting chromatin remodeling multiprotein complexes. In Xenopus laevis (African clawed frog), this protein is Zinc finger and BTB domain-containing protein 18.2 (zbtb18.2).